A 330-amino-acid polypeptide reads, in one-letter code: Ribosomal RNA small subunit methyltransferase C (330 aa).

Belongs to the methyltransferase superfamily. RsmC family. Monomer.

The protein localises to the cytoplasm. The catalysed reaction is guanosine(1207) in 16S rRNA + S-adenosyl-L-methionine = N(2)-methylguanosine(1207) in 16S rRNA + S-adenosyl-L-homocysteine + H(+). Functionally, specifically methylates the guanine in position 1207 of 16S rRNA in the 30S particle. The chain is Ribosomal RNA small subunit methyltransferase C from Haemophilus influenzae (strain PittEE).